The following is a 287-amino-acid chain: Protein PXR1 (287 aa).

Residues 25 to 72 (TSRFGHLQLEKFGWKPGMGLGMSPTSSHKTHIKVSIKDDNLGLGAKIK) enclose the G-patch domain. Over residues 143–155 (LKSYSNDKKRSRD) the composition is skewed to basic and acidic residues. The segment at 143–254 (LKSYSNDKKR…TTASNIPSTV (112 aa)) is disordered. Positions 163-190 (SKNKSKKQKKDKKDKKDKKDKKDKKDKK) are enriched in basic residues. The span at 191 to 200 (DKKDKTEKKE) shows a compositional bias: basic and acidic residues. Over residues 201–220 (KKEKKEKKEKKEKKDKKDKK) the composition is skewed to basic residues. A compositionally biased stretch (basic and acidic residues) spans 221 to 230 (DKKDKIDKKD). Residues 239–251 (NNIEVSTTASNIP) are compositionally biased toward polar residues.

Belongs to the PINX1 family.

The protein resides in the nucleus. It is found in the nucleolus. Functionally, involved in rRNA-processing at A0, A1 and A2 sites and negatively regulates telomerase. The chain is Protein PXR1 (PXR1) from Vanderwaltozyma polyspora (strain ATCC 22028 / DSM 70294 / BCRC 21397 / CBS 2163 / NBRC 10782 / NRRL Y-8283 / UCD 57-17) (Kluyveromyces polysporus).